Reading from the N-terminus, the 125-residue chain is Small ribosomal subunit protein uS13 (125 aa).

Residues G94–V116 are compositionally biased toward basic residues. Positions G94–R125 are disordered.

Belongs to the universal ribosomal protein uS13 family. As to quaternary structure, part of the 30S ribosomal subunit. Forms a loose heterodimer with protein S19. Forms two bridges to the 50S subunit in the 70S ribosome.

Functionally, located at the top of the head of the 30S subunit, it contacts several helices of the 16S rRNA. In the 70S ribosome it contacts the 23S rRNA (bridge B1a) and protein L5 of the 50S subunit (bridge B1b), connecting the 2 subunits; these bridges are implicated in subunit movement. Contacts the tRNAs in the A and P-sites. This chain is Small ribosomal subunit protein uS13, found in Nitrosospira multiformis (strain ATCC 25196 / NCIMB 11849 / C 71).